We begin with the raw amino-acid sequence, 145 residues long: Class I hydrophobin 1 (145 aa).

A signal peptide spans 1 to 18 (MYASVIIYTLVALCGVMS). 4 disulfides stabilise this stretch: cysteine 88–cysteine 118, cysteine 95–cysteine 112, cysteine 96–cysteine 106, and cysteine 119–cysteine 128. N-linked (GlcNAc...) asparagine glycosylation occurs at asparagine 108.

The protein belongs to the fungal hydrophobin family. As to quaternary structure, self-assembles to form functional amyloid fibrils called rodlets. Self-assembly into fibrillar rodlets occurs spontaneously at hydrophobic:hydrophilic interfaces and the rodlets further associate laterally to form amphipathic monolayers.

It localises to the secreted. The protein resides in the cell wall. Functionally, aerial growth, conidiation, and dispersal of filamentous fungi in the environment rely upon a capability of their secreting small amphipathic proteins called hydrophobins (HPBs) with low sequence identity. Class I can self-assemble into an outermost layer of rodlet bundles on aerial cell surfaces, conferring cellular hydrophobicity that supports fungal growth, development and dispersal; whereas Class II form highly ordered films at water-air interfaces through intermolecular interactions but contribute nothing to the rodlet structure. Hyd1 is a class I hydrophobin that is involved in plant root attachment and colonization, and that might also protect the growing hyphae from locally synthesized plant defense compounds during the first stages of cucumber interaction, allowing this opportunistic, non-pathogenic fungus to colonize the intercellular spaces of the plant root. In Trichoderma asperellum (Filamentous fungus), this protein is Class I hydrophobin 1.